Here is a 34-residue protein sequence, read N- to C-terminus: Photosystem II reaction center protein M (34 aa).

A helical membrane pass occupies residues 5-25 (ILAFIATTLFVLVPTAFLLII).

This sequence belongs to the PsbM family. PSII is composed of 1 copy each of membrane proteins PsbA, PsbB, PsbC, PsbD, PsbE, PsbF, PsbH, PsbI, PsbJ, PsbK, PsbL, PsbM, PsbT, PsbX, PsbY, PsbZ, Psb30/Ycf12, at least 3 peripheral proteins of the oxygen-evolving complex and a large number of cofactors. It forms dimeric complexes.

It localises to the plastid. Its subcellular location is the chloroplast thylakoid membrane. Functionally, one of the components of the core complex of photosystem II (PSII). PSII is a light-driven water:plastoquinone oxidoreductase that uses light energy to abstract electrons from H(2)O, generating O(2) and a proton gradient subsequently used for ATP formation. It consists of a core antenna complex that captures photons, and an electron transfer chain that converts photonic excitation into a charge separation. This subunit is found at the monomer-monomer interface. This Citrus sinensis (Sweet orange) protein is Photosystem II reaction center protein M.